The primary structure comprises 587 residues: Aspartate--tRNA ligase (587 aa).

Position 174 (glutamate 174) interacts with L-aspartate. Residues 198–201 are aspartate; it reads QITK. Residue arginine 220 participates in L-aspartate binding. ATP contacts are provided by residues 220-222 and glutamine 229; that span reads RDE. Histidine 443 serves as a coordination point for L-aspartate. An ATP-binding site is contributed by glutamate 477. Arginine 484 is an L-aspartate binding site. 529–532 serves as a coordination point for ATP; the sequence is GLDR.

It belongs to the class-II aminoacyl-tRNA synthetase family. Type 1 subfamily. As to quaternary structure, homodimer.

The protein resides in the cytoplasm. The catalysed reaction is tRNA(Asp) + L-aspartate + ATP = L-aspartyl-tRNA(Asp) + AMP + diphosphate. Catalyzes the attachment of L-aspartate to tRNA(Asp) in a two-step reaction: L-aspartate is first activated by ATP to form Asp-AMP and then transferred to the acceptor end of tRNA(Asp). This is Aspartate--tRNA ligase from Streptococcus pneumoniae (strain Hungary19A-6).